The following is a 172-amino-acid chain: Adenine phosphoribosyltransferase (172 aa).

Belongs to the purine/pyrimidine phosphoribosyltransferase family. As to quaternary structure, homodimer.

It is found in the cytoplasm. It carries out the reaction AMP + diphosphate = 5-phospho-alpha-D-ribose 1-diphosphate + adenine. Its pathway is purine metabolism; AMP biosynthesis via salvage pathway; AMP from adenine: step 1/1. Catalyzes a salvage reaction resulting in the formation of AMP, that is energically less costly than de novo synthesis. In Polynucleobacter asymbioticus (strain DSM 18221 / CIP 109841 / QLW-P1DMWA-1) (Polynucleobacter necessarius subsp. asymbioticus), this protein is Adenine phosphoribosyltransferase.